Consider the following 636-residue polypeptide: Probable cyclin-dependent serine/threonine-protein kinase DDB_G0278487 (636 aa).

The segment at 1 to 41 (MPSQSNNVITSSTASSSMSSSSNSSDASSTSSSNTNNAHSS) is disordered. Residues 64–343 (YEIISKIGEG…AEQALQSPFF (280 aa)) enclose the Protein kinase domain. ATP-binding positions include 70-78 (IGEGISGSV) and Lys93. Asp184 functions as the Proton acceptor in the catalytic mechanism. Disordered stretches follow at residues 378-408 (EQQK…QKKQ), 473-506 (KRQQ…NNSY), 527-555 (SETE…DEED), and 579-636 (NNQQ…LTIH). Residues 473-485 (KRQQQEHEQRLQR) are compositionally biased toward basic and acidic residues. Positions 486 to 499 (EQQQQLNQLQQQKE) are enriched in low complexity. Over residues 529–555 (TESEYESDEEDFYTEEEVEDYSSDEED) the composition is skewed to acidic residues. 2 stretches are compositionally biased toward low complexity: residues 579 to 594 (NNQQ…QQQQ) and 617 to 628 (NNNNGNNNNNNN).

The protein belongs to the protein kinase superfamily. CMGC Ser/Thr protein kinase family. CDC2/CDKX subfamily.

The catalysed reaction is L-seryl-[protein] + ATP = O-phospho-L-seryl-[protein] + ADP + H(+). It catalyses the reaction L-threonyl-[protein] + ATP = O-phospho-L-threonyl-[protein] + ADP + H(+). In Dictyostelium discoideum (Social amoeba), this protein is Probable cyclin-dependent serine/threonine-protein kinase DDB_G0278487.